Reading from the N-terminus, the 102-residue chain is Large ribosomal subunit protein bL21 (102 aa).

The protein belongs to the bacterial ribosomal protein bL21 family. In terms of assembly, part of the 50S ribosomal subunit. Contacts protein L20.

This protein binds to 23S rRNA in the presence of protein L20. This Bifidobacterium animalis subsp. lactis (strain AD011) protein is Large ribosomal subunit protein bL21.